Consider the following 422-residue polypeptide: MMVDVLIKDISQMVTMKGSNGPRRGKDMREVHLIEDGWIAIKGDKIVAVGSGLMEENLKIGKNTMVIDGKGKTVTPGLVDPHTHLVHGGSRENELALKLNGVPYLDILAQGGGILSTVKATRKATVEELMQQGKRSLDQMLSFGVTTVEVKSGYGLNTETELKQLEVIRQLNKEHPCDLVPTFMGAHAIPMEYKEDPDVFVDIVIDEMLPAVVERGLAEFCDVFCEKGVFTVAQSRRVLEAAREAGLKLRIHVDEIEALGGAELAAEMGAITAEHLMVTSEEDMKKMAKAGVIAALLPGTSFNLMVGKYAQARKMIDYGVPITLSTDYNPGSCPTENIQFIMTLGCLAMKMTPEEVFTAVTINGAAAVDRQGDIGSLEVGKKADVVIFNAPNINYIPYHFGINHVDKVLKNGKLVVDKGRVI.

Residues His-82 and His-84 each contribute to the Fe(3+) site. Residues His-82 and His-84 each contribute to the Zn(2+) site. Residues Arg-91, Tyr-154, and His-187 each contribute to the 4-imidazolone-5-propanoate site. N-formimidoyl-L-glutamate is bound at residue Tyr-154. Residue His-252 participates in Fe(3+) binding. His-252 is a binding site for Zn(2+). Glu-255 is a 4-imidazolone-5-propanoate binding site. Asp-327 lines the Fe(3+) pocket. Zn(2+) is bound at residue Asp-327. The N-formimidoyl-L-glutamate site is built by Asn-329 and Gly-331. Ser-332 is a 4-imidazolone-5-propanoate binding site.

Belongs to the metallo-dependent hydrolases superfamily. HutI family. It depends on Zn(2+) as a cofactor. The cofactor is Fe(3+).

The protein resides in the cytoplasm. It carries out the reaction 4-imidazolone-5-propanoate + H2O = N-formimidoyl-L-glutamate. It participates in amino-acid degradation; L-histidine degradation into L-glutamate; N-formimidoyl-L-glutamate from L-histidine: step 3/3. Functionally, catalyzes the hydrolytic cleavage of the carbon-nitrogen bond in imidazolone-5-propanoate to yield N-formimidoyl-L-glutamate. It is the third step in the universal histidine degradation pathway. The protein is Imidazolonepropionase of Alkaliphilus metalliredigens (strain QYMF).